The sequence spans 1412 residues: Sister chromatid cohesion protein PDS5 homolog B (1412 aa).

An HEAT repeat occupies 383–419 (LLVNDHLLNFVRERTLDKRWRVRKEAMMGLAQIYKKY). The tract at residues 1137 to 1412 (PLSSAGKQSQ…RRRTSKRERR (276 aa)) is disordered. Composition is skewed to low complexity over residues 1139–1149 (SSAGKQSQSKS) and 1156–1167 (SNASSSSNPSSP). 4 stretches are compositionally biased toward basic and acidic residues: residues 1172-1184 (GRLDSTEMDHSEN), 1196-1212 (KKTDKRDDSDLSELEKP), 1223-1241 (SEEKLSIDDLNKLGQDQKL), and 1263-1272 (QEEKRLKEDV). Residues 1322 to 1331 (VEEEEEEEER) show a composition bias toward acidic residues. Over residues 1350–1362 (RTQQSRAGRSKQA) the composition is skewed to polar residues. Acidic residues predominate over residues 1386–1397 (VPQEEVMEEEEV). A compositionally biased stretch (basic residues) spans 1402-1412 (VRRRTSKRERR).

As to quaternary structure, interacts with the cohesin complex.

Its subcellular location is the nucleus. Functionally, plays a role in androgen-induced proliferative arrest. Required for maintenance of sister chromatid cohesion during mitosis. The sequence is that of Sister chromatid cohesion protein PDS5 homolog B (PDS5B) from Gallus gallus (Chicken).